Consider the following 566-residue polypeptide: Chromatin assembly factor 1 subunit B (566 aa).

WD repeat units lie at residues 11-54 (HNKE…DGKA), 64-103 (RHTKAVNVVRFSPSGEVLASGGDDAVILLWKLNDSKELEP), 127-166 (GHLEDVYDICWTSDGNYMASASVDNTAIMWDVVKGQKVSI), 169-208 (EHKSYVQGITWDPLGQYIATLSCDRVLRVYNTQTKRVAFN), 228-279 (FHDD…RPMG), and 351-392 (IHYH…IPLK). Disordered regions lie at residues 411–481 (KSQP…NQPR) and 501–566 (IPLK…KPNK). 2 stretches are compositionally biased toward polar residues: residues 425–437 (TEGTSLSTPTLQP) and 469–478 (QPASQSTKVN).

This sequence belongs to the WD repeat HIR1 family. In terms of assembly, interacts with CHAF1A.

It localises to the nucleus. Its function is as follows. Acts as a component of the histone chaperone complex chromatin assembly factor 1 (CAF-1), which assembles histone octamers onto DNA during replication and repair. CAF-1 performs the first step of the nucleosome assembly process, bringing newly synthesized histones H3 and H4 to replicating DNA; histones H2A/H2B can bind to this chromatin precursor subsequent to DNA replication to complete the histone octamer. The chain is Chromatin assembly factor 1 subunit B (CHAF1B) from Gallus gallus (Chicken).